The following is a 607-amino-acid chain: Elongation factor 4 (607 aa).

The 183-residue stretch at 11 to 193 (SKIRNFSIIA…QIVEKVPAPA (183 aa)) folds into the tr-type G domain. GTP contacts are provided by residues 23–28 (DHGKST) and 140–143 (NKID).

This sequence belongs to the TRAFAC class translation factor GTPase superfamily. Classic translation factor GTPase family. LepA subfamily.

It is found in the cell membrane. It catalyses the reaction GTP + H2O = GDP + phosphate + H(+). Its function is as follows. Required for accurate and efficient protein synthesis under certain stress conditions. May act as a fidelity factor of the translation reaction, by catalyzing a one-codon backward translocation of tRNAs on improperly translocated ribosomes. Back-translocation proceeds from a post-translocation (POST) complex to a pre-translocation (PRE) complex, thus giving elongation factor G a second chance to translocate the tRNAs correctly. Binds to ribosomes in a GTP-dependent manner. In Bacillus cereus (strain ATCC 14579 / DSM 31 / CCUG 7414 / JCM 2152 / NBRC 15305 / NCIMB 9373 / NCTC 2599 / NRRL B-3711), this protein is Elongation factor 4.